A 137-amino-acid polypeptide reads, in one-letter code: Small ribosomal subunit protein uS12 (137 aa).

Residues 1 to 57 form a disordered region; sequence MPTINQLVRKPRKSKVKKSKSPALNVGYNSRKKVQTNVSSPQKRGVATRVGTMTPKK. Residues 9–20 are compositionally biased toward basic residues; the sequence is RKPRKSKVKKSK. Asp-102 carries the post-translational modification 3-methylthioaspartic acid.

This sequence belongs to the universal ribosomal protein uS12 family. Part of the 30S ribosomal subunit. Contacts proteins S8 and S17. May interact with IF1 in the 30S initiation complex.

In terms of biological role, with S4 and S5 plays an important role in translational accuracy. Interacts with and stabilizes bases of the 16S rRNA that are involved in tRNA selection in the A site and with the mRNA backbone. Located at the interface of the 30S and 50S subunits, it traverses the body of the 30S subunit contacting proteins on the other side and probably holding the rRNA structure together. The combined cluster of proteins S8, S12 and S17 appears to hold together the shoulder and platform of the 30S subunit. This is Small ribosomal subunit protein uS12 from Streptococcus suis (strain 05ZYH33).